The chain runs to 388 residues: Quinolone resistance protein NorA (388 aa).

The next 12 helical transmembrane spans lie at 5–25 (IFVL…VIPV), 42–62 (LLVA…GTLA), 69–89 (LIIC…AVGH), 99–119 (VIGG…IADI), 129–149 (FGYM…IGGF), 157–177 (MPFY…IVLI), 201–221 (WKVF…LSAF), 239–259 (DISI…IYFF), 269–289 (LTFI…LVFA), 293–313 (WSIM…RPAI), 331–351 (LNST…GALF), and 355–375 (IEAP…IVLI).

The protein belongs to the major facilitator superfamily. TCR/Tet family.

Its subcellular location is the cell membrane. In terms of biological role, involved in quinolone resistance. May constitute a membrane-associated active efflux pump of hydrophilic quinolones. This chain is Quinolone resistance protein NorA (norA), found in Staphylococcus aureus (strain Mu50 / ATCC 700699).